The sequence spans 131 residues: Small ribosomal subunit protein uS11 (131 aa).

This sequence belongs to the universal ribosomal protein uS11 family. In terms of assembly, part of the 30S ribosomal subunit. Interacts with proteins S7 and S18. Binds to IF-3.

Its function is as follows. Located on the platform of the 30S subunit, it bridges several disparate RNA helices of the 16S rRNA. Forms part of the Shine-Dalgarno cleft in the 70S ribosome. The sequence is that of Small ribosomal subunit protein uS11 from Buchnera aphidicola subsp. Acyrthosiphon pisum (strain 5A).